The following is a 154-amino-acid chain: Ubiquitin-conjugating enzyme E2 L3 (154 aa).

The UBC core domain maps to 2 to 149 (AASRRLMKEL…AEEFTKKYGE (148 aa)). The active-site Glycyl thioester intermediate is Cys-86. Lys-131 is modified (N6-acetyllysine).

The protein belongs to the ubiquitin-conjugating enzyme family. In terms of assembly, interacts with PRKN; involved in ubiquitination and degradation of misfolded proteins. Interacts with UBE3A. Interacts with CCNB1IP1, CBL, ZAP70, RNF19A, RNF19B and RNF144B. Interacts with ARIH1. Interacts with ARIH2 (via RING-type 1). Interacts with NCOA1; they functionally interact to regulate progesterone receptor transcriptional activity. Interacts with NDFIP1 (via N-terminus); the interaction mediates recruitment of UBE2L3 to ITCH and causes MAP3K7 ubiquitination. In terms of processing, ubiquitinated. The alteration of UBE2L3 protein levels during the S-phase of the cell cycle is due to ubiquitin-dependent proteasomal degradation. Autoubiquitinated in vitro.

The protein resides in the nucleus. It is found in the cytoplasm. The enzyme catalyses S-ubiquitinyl-[E1 ubiquitin-activating enzyme]-L-cysteine + [E2 ubiquitin-conjugating enzyme]-L-cysteine = [E1 ubiquitin-activating enzyme]-L-cysteine + S-ubiquitinyl-[E2 ubiquitin-conjugating enzyme]-L-cysteine.. Its pathway is protein modification; protein ubiquitination. In terms of biological role, ubiquitin-conjugating enzyme E2 that specifically acts with HECT-type and RBR family E3 ubiquitin-protein ligases. Does not function with most RING-containing E3 ubiquitin-protein ligases because it lacks intrinsic E3-independent reactivity with lysine: in contrast, it has activity with the RBR family E3 enzymes, such as PRKN, RNF31 and ARIH1, that function like RING-HECT hybrids. Accepts ubiquitin from the E1 complex and catalyzes its covalent attachment to other proteins. Mediates ubiquitination by the CUL9-RBX1 complex. In vitro catalyzes 'Lys-11'-linked polyubiquitination. Involved in the selective degradation of short-lived and abnormal proteins. Down-regulated during the S-phase it is involved in progression through the cell cycle. Regulates nuclear hormone receptors transcriptional activity. May play a role in myelopoiesis. The protein is Ubiquitin-conjugating enzyme E2 L3 (UBE2L3) of Bos taurus (Bovine).